A 77-amino-acid chain; its full sequence is Large ribosomal subunit protein bL28 (77 aa).

It belongs to the bacterial ribosomal protein bL28 family.

This chain is Large ribosomal subunit protein bL28, found in Polaromonas naphthalenivorans (strain CJ2).